The sequence spans 116 residues: Iron-sulfur cluster insertion protein ErpA (116 aa).

Residues cysteine 44, cysteine 108, and cysteine 110 each coordinate iron-sulfur cluster.

Belongs to the HesB/IscA family. As to quaternary structure, homodimer. Iron-sulfur cluster is required as a cofactor.

In terms of biological role, required for insertion of 4Fe-4S clusters for at least IspG. This Shewanella oneidensis (strain ATCC 700550 / JCM 31522 / CIP 106686 / LMG 19005 / NCIMB 14063 / MR-1) protein is Iron-sulfur cluster insertion protein ErpA.